A 207-amino-acid chain; its full sequence is Ras-related protein RABH1e (207 aa).

GTP is bound at residue 16–23 (GDQSVGKT). Positions 38–46 (YQATIGIDF) match the Effector region motif. Residues 64 to 68 (DTAGQ), 122 to 125 (NKTD), and 152 to 153 (SA) each bind GTP. Residues cysteine 205 and cysteine 207 are each lipidated (S-geranylgeranyl cysteine). Cysteine 207 is modified (cysteine methyl ester).

Belongs to the small GTPase superfamily. Rab family.

The protein resides in the golgi apparatus membrane. Its function is as follows. Protein transport. Regulator of membrane traffic from the Golgi apparatus towards the endoplasmic reticulum (ER). This chain is Ras-related protein RABH1e (RABH1E), found in Arabidopsis thaliana (Mouse-ear cress).